The chain runs to 2457 residues: Highly reducing polyketide synthase ACTTS3 (2457 aa).

One can recognise a Ketosynthase family 3 (KS3) domain in the interval 5–435 (REPIAVIGSA…GTNAHVILES (431 aa)). Residues Cys-179, His-316, and His-356 each act as for beta-ketoacyl synthase activity in the active site. The malonyl-CoA:ACP transacylase (MAT) domain stretch occupies residues 545-856 (RVLGIFTGQG…VMEAVLESSP (312 aa)). Ser-641 functions as the For malonyltransferase activity in the catalytic mechanism. The segment at 938–1078 (HELLGRRTAD…GRIIIHLGSG (141 aa)) is N-terminal hotdog fold. Residues 938–1244 (HELLGRRTAD…LSLKSVAEPT (307 aa)) are dehydratase (DH) domain. Residues 938 to 1246 (HELLGRRTAD…LKSVAEPTEE (309 aa)) enclose the PKS/mFAS DH domain. His-970 acts as the Proton acceptor; for dehydratase activity in catalysis. Residues 1091 to 1246 (TDLSPVDLDR…LKSVAEPTEE (156 aa)) are C-terminal hotdog fold. Catalysis depends on Asp-1152, which acts as the Proton donor; for dehydratase activity. The tract at residues 1399–1587 (ETMNNCIARA…DVFYDFPDRS (189 aa)) is methyltransferase (CMet) domain. The ketoreductase (KR) domain stretch occupies residues 2085-2281 (FLPDKTYLMI…SDRHIENHLR (197 aa)). The region spanning 2374-2451 (DVTTVFQQAF…EISIDATKKY (78 aa)) is the Carrier domain. Ser-2411 carries the post-translational modification O-(pantetheine 4'-phosphoryl)serine.

Pantetheine 4'-phosphate is required as a cofactor.

It functions in the pathway mycotoxin biosynthesis. In terms of biological role, highly reducing polyketide synthase; part of the gene clusters that mediate the biosynthesis of the host-selective toxins (HSTs) ACT-toxins responsible for brown spot of tangerine disease by the tangerine pathotype which affects tangerines and mandarins. ACT-toxins consist of three moieties, 9,10-epoxy-8-hydroxy-9-methyl-decatrienoic acid (EDA), valine and a polyketide. ACT-toxin I is toxic to both citrus and pear; toxin II the 5''-deoxy derivative of ACT-toxin I, is highly toxic to pear and slightly toxic to citrus. On cellular level, ACT-toxins affect plasma membrane of susceptible cells and cause a sudden increase in loss of K(+) after a few minutes of toxin treatment. The acyl-CoA ligase ACTT1, the hydrolase ACTT2, the enoyl-CoA hydratases ACTT3 and ACTT6, and the acyl-CoA synthetase ACTT5 are all involved in the biosynthesis of the AK-, AF- and ACT-toxin common 9,10-epoxy-8-hydroxy-9-methyl-decatrienoic acid (EDA) structural moiety. The exact role of each enzyme, and of additional enzymes identified within the AF-toxin clusters have still to be determined. On the other hand, ACTTS1 to ACTTS4 are specific to the tangerine pathotype. The function of ACTTS3 is to elongate the polyketide chain portion of ACT-toxin that is unique to this toxin. The enoyl-reductase ACTTS2 might complement the missing enoyl-reductase (ER) domain in ACTTS3 in the synthesis of the polyketide portion of ACT-toxin. The roles of the nonribosomal peptide synthetases-related proteins ACTTS1 and ACTTS4 have also still not been elucidated. The sequence is that of Highly reducing polyketide synthase ACTTS3 from Alternaria alternata (Alternaria rot fungus).